Here is a 334-residue protein sequence, read N- to C-terminus: Anthranilate phosphoribosyltransferase (334 aa).

5-phospho-alpha-D-ribose 1-diphosphate contacts are provided by residues G79, 82–83 (GD), S87, 89–92 (NIST), 107–115 (KAGNRSISS), and S119. G79 is a binding site for anthranilate. A Mg(2+)-binding site is contributed by S91. Position 110 (N110) interacts with anthranilate. R165 serves as a coordination point for anthranilate. Residues D224 and E225 each coordinate Mg(2+).

The protein belongs to the anthranilate phosphoribosyltransferase family. As to quaternary structure, homodimer. The cofactor is Mg(2+).

The catalysed reaction is N-(5-phospho-beta-D-ribosyl)anthranilate + diphosphate = 5-phospho-alpha-D-ribose 1-diphosphate + anthranilate. Its pathway is amino-acid biosynthesis; L-tryptophan biosynthesis; L-tryptophan from chorismate: step 2/5. Its function is as follows. Catalyzes the transfer of the phosphoribosyl group of 5-phosphorylribose-1-pyrophosphate (PRPP) to anthranilate to yield N-(5'-phosphoribosyl)-anthranilate (PRA). This chain is Anthranilate phosphoribosyltransferase, found in Streptococcus thermophilus (strain ATCC BAA-250 / LMG 18311).